The chain runs to 338 residues: MYG1 protein YER156C (338 aa).

It belongs to the MYG1 family.

In Saccharomyces cerevisiae (strain ATCC 204508 / S288c) (Baker's yeast), this protein is MYG1 protein YER156C.